The sequence spans 307 residues: Acetaldehyde dehydrogenase (307 aa).

An NAD(+)-binding site is contributed by S12–I15. C130 serves as the catalytic Acyl-thioester intermediate. Residues S161–N169 and N272 each bind NAD(+).

The protein belongs to the acetaldehyde dehydrogenase family.

The enzyme catalyses acetaldehyde + NAD(+) + CoA = acetyl-CoA + NADH + H(+). This is Acetaldehyde dehydrogenase from Shewanella pealeana (strain ATCC 700345 / ANG-SQ1).